Here is a 172-residue protein sequence, read N- to C-terminus: MKLGIVIFPSKMIQDKANGLRKRYDPHYALVPPHITLKTPFETQDEQLESIVNELHTIAGKTNPFTLHVGKVGSFAPVNNVLYFKVEKTPELTFLNEEMHGGLFTQEREYAFVPHLTIGQGLSDAEHADVLGRLRMKDFYYEQPIDRFHLLYQLENGTWTVHETFHLGKGNN.

The Proton donor role is filled by H34. 2 consecutive short sequence motifs (HXTX) follow at residues 34-37 (HITL) and 115-118 (HLTI). H115 serves as the catalytic Proton acceptor.

Belongs to the 2H phosphoesterase superfamily. YjcG family.

This Bacillus cereus (strain G9842) protein is Putative phosphoesterase BCG9842_B4061.